Reading from the N-terminus, the 474-residue chain is ABHD16B (474 aa).

The 121-residue stretch at 175–295 folds into the AB hydrolase-1 domain; the sequence is VICCEGNAGF…QSWKGLVVRT (121 aa). Active-site charge relay system residues include S248, D323, and H423.

Belongs to the AB hydrolase superfamily. ABHD16 family. Expressed in most tissues, with highest expression found in the testes, skeletal muscle, and brown adipose tissue.

It catalyses the reaction a 1,2-diacyl-sn-glycero-3-phospho-L-serine + H2O = a 2-acyl-sn-glycero-3-phospho-L-serine + a fatty acid + H(+). The catalysed reaction is a 1-acylglycerol + H2O = glycerol + a fatty acid + H(+). It carries out the reaction 1-(9Z-octadecenoyl)-glycerol + H2O = glycerol + (9Z)-octadecenoate + H(+). In terms of biological role, hydrolyzes the sn-1 position of glycerophospholipids with high specificity towards phosphatidylserine (PS), PS-PLA1 enzyme. Also hydrolyzes the acyl chain of glycerolipids with a preference for the monoacylglycerol (MAG) 1-acylglycerol, MAG lipase. Plays a regulatory role in cellular lipid homeostasis by modulating genes involved in neutral lipid degradation and in phospholipid synthesis and composition. The chain is ABHD16B from Mus musculus (Mouse).